The chain runs to 118 residues: Large ribosomal subunit protein uL18 (118 aa).

Belongs to the universal ribosomal protein uL18 family. In terms of assembly, part of the 50S ribosomal subunit; part of the 5S rRNA/L5/L18/L25 subcomplex. Contacts the 5S and 23S rRNAs.

Its function is as follows. This is one of the proteins that bind and probably mediate the attachment of the 5S RNA into the large ribosomal subunit, where it forms part of the central protuberance. This Limosilactobacillus reuteri (strain DSM 20016) (Lactobacillus reuteri) protein is Large ribosomal subunit protein uL18.